The primary structure comprises 283 residues: 4-diphosphocytidyl-2-C-methyl-D-erythritol kinase (283 aa).

K10 is an active-site residue. An ATP-binding site is contributed by 99–109 (PMGGGLGGGSS). Residue D141 is part of the active site.

Belongs to the GHMP kinase family. IspE subfamily. As to quaternary structure, homodimer.

The enzyme catalyses 4-CDP-2-C-methyl-D-erythritol + ATP = 4-CDP-2-C-methyl-D-erythritol 2-phosphate + ADP + H(+). Its pathway is isoprenoid biosynthesis; isopentenyl diphosphate biosynthesis via DXP pathway; isopentenyl diphosphate from 1-deoxy-D-xylulose 5-phosphate: step 3/6. Functionally, catalyzes the phosphorylation of the position 2 hydroxy group of 4-diphosphocytidyl-2C-methyl-D-erythritol. This Escherichia coli O7:K1 (strain IAI39 / ExPEC) protein is 4-diphosphocytidyl-2-C-methyl-D-erythritol kinase.